Reading from the N-terminus, the 753-residue chain is Probable phosphoenolpyruvate synthase (753 aa).

H398 functions as the Tele-phosphohistidine intermediate in the catalytic mechanism. R488, R535, E631, G653, T654, N655, and D656 together coordinate substrate. Residue E631 coordinates Mg(2+). D656 lines the Mg(2+) pocket. C703 (proton donor) is an active-site residue.

The protein belongs to the PEP-utilizing enzyme family. Mg(2+) serves as cofactor.

It catalyses the reaction pyruvate + ATP + H2O = phosphoenolpyruvate + AMP + phosphate + 2 H(+). It participates in carbohydrate biosynthesis; gluconeogenesis. Its function is as follows. Catalyzes the phosphorylation of pyruvate to phosphoenolpyruvate. This is Probable phosphoenolpyruvate synthase (ppsA) from Archaeoglobus fulgidus (strain ATCC 49558 / DSM 4304 / JCM 9628 / NBRC 100126 / VC-16).